A 497-amino-acid chain; its full sequence is ADP-dependent glucokinase (497 aa).

A signal peptide spans 1 to 22; the sequence is MALWRGSAYAGFLALAVGCVFL. Residues 52–497 enclose the ADPK domain; it reads SPEGRLAAAW…LFYSEVHPHL (446 aa). The Mg(2+) site is built by glutamate 297, glutamate 328, and aspartate 481. Catalysis depends on aspartate 481, which acts as the Proton acceptor.

Belongs to the ADP-dependent glucokinase family. In terms of assembly, monomer. It depends on Mg(2+) as a cofactor.

It is found in the secreted. The catalysed reaction is D-glucose + ADP = D-glucose 6-phosphate + AMP + H(+). It functions in the pathway carbohydrate degradation; glycolysis. Catalyzes the phosphorylation of D-glucose to D-glucose 6-phosphate using ADP as the phosphate donor. GDP and CDP can replace ADP, but with reduced efficiency. The chain is ADP-dependent glucokinase (ADPGK) from Bos taurus (Bovine).